Reading from the N-terminus, the 232-residue chain is Large ribosomal subunit protein uL1 (232 aa).

This sequence belongs to the universal ribosomal protein uL1 family. Part of the 50S ribosomal subunit.

Binds directly to 23S rRNA. The L1 stalk is quite mobile in the ribosome, and is involved in E site tRNA release. Its function is as follows. Protein L1 is also a translational repressor protein, it controls the translation of the L11 operon by binding to its mRNA. This is Large ribosomal subunit protein uL1 from Alkaliphilus oremlandii (strain OhILAs) (Clostridium oremlandii (strain OhILAs)).